The sequence spans 37 residues: Large ribosomal subunit protein bL36 (37 aa).

Belongs to the bacterial ribosomal protein bL36 family.

The sequence is that of Large ribosomal subunit protein bL36 from Mycoplasmopsis pulmonis (strain UAB CTIP) (Mycoplasma pulmonis).